The sequence spans 333 residues: 6-phosphogluconolactonase (333 aa).

The protein belongs to the cycloisomerase 2 family.

The enzyme catalyses 6-phospho-D-glucono-1,5-lactone + H2O = 6-phospho-D-gluconate + H(+). The protein operates within carbohydrate degradation; pentose phosphate pathway; D-ribulose 5-phosphate from D-glucose 6-phosphate (oxidative stage): step 2/3. In terms of biological role, catalyzes the hydrolysis of 6-phosphogluconolactone to 6-phosphogluconate. This chain is 6-phosphogluconolactonase, found in Cronobacter sakazakii (strain ATCC BAA-894) (Enterobacter sakazakii).